We begin with the raw amino-acid sequence, 368 residues long: Ubiquitin domain-containing protein UBFD1 (368 aa).

Residues 106 to 139 (SCDARGNLQPAPAQPPGDPAAQASVSNGEDAGGG) are disordered. A Ubiquitin-like domain is found at 143 to 218 (ELVDLKIIWN…IMVVGSTIND (76 aa)). The segment at 231 to 263 (QDAKAEENKKEPLCRQKQHRKVLDKGKPEDVMP) is disordered. 2 stretches are compositionally biased toward basic and acidic residues: residues 233 to 244 (AKAEENKKEPLC) and 251 to 260 (KVLDKGKPED).

The protein is Ubiquitin domain-containing protein UBFD1 (Ubfd1) of Mus musculus (Mouse).